Reading from the N-terminus, the 293-residue chain is Large ribosomal subunit protein uL2c (293 aa).

Positions 224–245 (VMNPVDHPHGGGEGKSPIGRAR) are disordered.

The protein belongs to the universal ribosomal protein uL2 family. Part of the 50S ribosomal subunit.

Its subcellular location is the plastid. The protein resides in the chloroplast. This Pyropia yezoensis (Susabi-nori) protein is Large ribosomal subunit protein uL2c (rpl2).